A 705-amino-acid chain; its full sequence is Elongation factor G (705 aa).

Residues 8-290 (ERYRNFGIMA…GVVHLLPSPA (283 aa)) form the tr-type G domain. GTP contacts are provided by residues 17 to 24 (AHIDAGKT), 88 to 92 (DTPGH), and 142 to 145 (NKMD). The tract at residues 290 to 309 (ADRPPVQGIDEDEKEDTRAA) is disordered.

It belongs to the TRAFAC class translation factor GTPase superfamily. Classic translation factor GTPase family. EF-G/EF-2 subfamily.

Its subcellular location is the cytoplasm. In terms of biological role, catalyzes the GTP-dependent ribosomal translocation step during translation elongation. During this step, the ribosome changes from the pre-translocational (PRE) to the post-translocational (POST) state as the newly formed A-site-bound peptidyl-tRNA and P-site-bound deacylated tRNA move to the P and E sites, respectively. Catalyzes the coordinated movement of the two tRNA molecules, the mRNA and conformational changes in the ribosome. This Xanthomonas euvesicatoria pv. vesicatoria (strain 85-10) (Xanthomonas campestris pv. vesicatoria) protein is Elongation factor G.